Consider the following 278-residue polypeptide: Ribosomal RNA small subunit methyltransferase A (278 aa).

N25, L27, G52, E73, D97, and N117 together coordinate S-adenosyl-L-methionine.

Belongs to the class I-like SAM-binding methyltransferase superfamily. rRNA adenine N(6)-methyltransferase family. RsmA subfamily.

Its subcellular location is the cytoplasm. It catalyses the reaction adenosine(1518)/adenosine(1519) in 16S rRNA + 4 S-adenosyl-L-methionine = N(6)-dimethyladenosine(1518)/N(6)-dimethyladenosine(1519) in 16S rRNA + 4 S-adenosyl-L-homocysteine + 4 H(+). In terms of biological role, specifically dimethylates two adjacent adenosines (A1518 and A1519) in the loop of a conserved hairpin near the 3'-end of 16S rRNA in the 30S particle. May play a critical role in biogenesis of 30S subunits. This chain is Ribosomal RNA small subunit methyltransferase A, found in Desulfitobacterium hafniense (strain DSM 10664 / DCB-2).